The chain runs to 176 residues: Ribosome maturation factor RimM (176 aa).

The PRC barrel domain maps to 97-176; sequence EDEFYWRDLI…QILVDWDPDF (80 aa).

It belongs to the RimM family. Binds ribosomal protein uS19.

The protein localises to the cytoplasm. Functionally, an accessory protein needed during the final step in the assembly of 30S ribosomal subunit, possibly for assembly of the head region. Essential for efficient processing of 16S rRNA. May be needed both before and after RbfA during the maturation of 16S rRNA. It has affinity for free ribosomal 30S subunits but not for 70S ribosomes. This Shewanella oneidensis (strain ATCC 700550 / JCM 31522 / CIP 106686 / LMG 19005 / NCIMB 14063 / MR-1) protein is Ribosome maturation factor RimM.